Consider the following 330-residue polypeptide: Methionyl-tRNA formyltransferase (330 aa).

A (6S)-5,6,7,8-tetrahydrofolate-binding site is contributed by 117-120 (SLLP).

Belongs to the Fmt family.

It catalyses the reaction L-methionyl-tRNA(fMet) + (6R)-10-formyltetrahydrofolate = N-formyl-L-methionyl-tRNA(fMet) + (6S)-5,6,7,8-tetrahydrofolate + H(+). Functionally, attaches a formyl group to the free amino group of methionyl-tRNA(fMet). The formyl group appears to play a dual role in the initiator identity of N-formylmethionyl-tRNA by promoting its recognition by IF2 and preventing the misappropriation of this tRNA by the elongation apparatus. The polypeptide is Methionyl-tRNA formyltransferase (Verminephrobacter eiseniae (strain EF01-2)).